Consider the following 550-residue polypeptide: Sorting nexin-33 (550 aa).

The 61-residue stretch at 1–61 (MALKARALYS…PASYVEIQSS (61 aa)) folds into the SH3 domain. Positions 62 to 152 (RSGSVQVDYS…QDSIASGKRG (91 aa)) are disordered. Positions 86 to 102 (YDDDDEEDDDDWDDWDD) are enriched in acidic residues. Over residues 128–144 (SRPEYSHRPRPALERQD) the composition is skewed to basic and acidic residues. The PX domain maps to 206–316 (FNCSVEEPTK…HFLGCQDEKQ (111 aa)). The BAR domain maps to 347–550 (LQDVEERVDV…EKTLHLYDEL (204 aa)).

Belongs to the sorting nexin family.

It is found in the cytoplasm. It localises to the cytosol. Its subcellular location is the membrane. The protein localises to the cytoplasmic vesicle membrane. Its function is as follows. Plays a role in the reorganization of the cytoskeleton, endocytosis and cellular vesicle trafficking, both during interphase and at the end of mitotic cell divisions. Required for efficient progress through mitosis and cytokinesis. Required for normal formation of the cleavage furrow at the end of mitosis. Modulates endocytosis of cell-surface proteins. Promotes membrane tubulation (in vitro). May promote the formation of macropinosomes. In Xenopus laevis (African clawed frog), this protein is Sorting nexin-33 (snx33).